The sequence spans 324 residues: Type II restriction enzyme AplI (324 aa).

It belongs to the BsuBI/PstI type II restriction endonuclease family. Mg(2+) is required as a cofactor.

It catalyses the reaction Endonucleolytic cleavage of DNA to give specific double-stranded fragments with terminal 5'-phosphates.. Its activity is regulated as follows. Activated by K(+) and Na(+) ions, whereas NH(4)(+) ions appear to inhibit endonuclease activity. Its function is as follows. A P subtype restriction enzyme that recognizes the double-stranded sequence 5'-CTGCAG-3' and cleaves after A-5. This is Type II restriction enzyme AplI (aplIR) from Arthrospira platensis (strain NIES-39 / UTEX 3086 / IAM M-135) (Spirulina platensis).